A 215-amino-acid chain; its full sequence is Cytochrome c biogenesis ATP-binding export protein CcmA (215 aa).

Positions 3-215 (LEAENLAGER…MAAFSVEDIA (213 aa)) constitute an ABC transporter domain. ATP is bound at residue 35-42 (GPNGSGKS).

It belongs to the ABC transporter superfamily. CcmA exporter (TC 3.A.1.107) family. In terms of assembly, the complex is composed of two ATP-binding proteins (CcmA) and two transmembrane proteins (CcmB).

The protein resides in the cell inner membrane. It carries out the reaction heme b(in) + ATP + H2O = heme b(out) + ADP + phosphate + H(+). Functionally, part of the ABC transporter complex CcmAB involved in the biogenesis of c-type cytochromes; once thought to export heme, this seems not to be the case, but its exact role is uncertain. Responsible for energy coupling to the transport system. The sequence is that of Cytochrome c biogenesis ATP-binding export protein CcmA from Brucella abortus (strain 2308).